The following is a 125-amino-acid chain: Protein MGF 110-3L (125 aa).

Topologically, residues 1-6 (MLVIFL) are cytoplasmic. Residues 7-27 (GILGLLANQVFGLPAKNAGHL) traverse the membrane as a helical segment. Over 28–116 (YSTENPPEEE…VPHNRPHRLG (89 aa)) the chain is Extracellular. N-linked (GlcNAc...) asparagine; by host glycosylation occurs at N64.

Belongs to the asfivirus MGF 110 family.

It localises to the host membrane. In terms of biological role, plays a role in virus cell tropism, and may be required for efficient virus replication in macrophages. The polypeptide is Protein MGF 110-3L (African swine fever virus (isolate Pig/Kenya/KEN-50/1950) (ASFV)).